The primary structure comprises 339 residues: Tetraacyldisaccharide 4'-kinase (339 aa).

44–51 (TVGGTGKT) is an ATP binding site.

Belongs to the LpxK family.

It carries out the reaction a lipid A disaccharide + ATP = a lipid IVA + ADP + H(+). Its pathway is glycolipid biosynthesis; lipid IV(A) biosynthesis; lipid IV(A) from (3R)-3-hydroxytetradecanoyl-[acyl-carrier-protein] and UDP-N-acetyl-alpha-D-glucosamine: step 6/6. In terms of biological role, transfers the gamma-phosphate of ATP to the 4'-position of a tetraacyldisaccharide 1-phosphate intermediate (termed DS-1-P) to form tetraacyldisaccharide 1,4'-bis-phosphate (lipid IVA). The sequence is that of Tetraacyldisaccharide 4'-kinase from Bdellovibrio bacteriovorus (strain ATCC 15356 / DSM 50701 / NCIMB 9529 / HD100).